The sequence spans 555 residues: Urocanate hydratase (555 aa).

Residues 51–52 (GG), glutamine 129, 175–177 (GMG), glutamate 195, 241–242 (NA), 262–266 (QTSAH), 272–273 (YL), and tyrosine 321 contribute to the NAD(+) site. Residue cysteine 409 is part of the active site. Glycine 491 contacts NAD(+).

Belongs to the urocanase family. NAD(+) serves as cofactor.

Its subcellular location is the cytoplasm. The catalysed reaction is 4-imidazolone-5-propanoate = trans-urocanate + H2O. It participates in amino-acid degradation; L-histidine degradation into L-glutamate; N-formimidoyl-L-glutamate from L-histidine: step 2/3. In terms of biological role, catalyzes the conversion of urocanate to 4-imidazolone-5-propionate. This is Urocanate hydratase from Hyphomonas neptunium (strain ATCC 15444).